Here is a 471-residue protein sequence, read N- to C-terminus: Proline and serine-rich protein 2 (471 aa).

2 disordered regions span residues 1-46 (MPGN…SFTM) and 82-247 (CDSG…GDHV). Over residues 26-43 (LSRGGSLESRCSSSRSRS) the composition is skewed to low complexity. A Phosphoserine modification is found at S43. T45 carries the phosphothreonine modification. Low complexity predominate over residues 90-101 (SPQSLEESPSSH). Residues 154 to 177 (LPPPDSRGPEVFPLPPSLPVPAPS) show a composition bias toward pro residues. Phosphoserine occurs at positions 187, 220, and 223. At R263 the chain carries Asymmetric dimethylarginine; alternate. Residue R263 is modified to Omega-N-methylarginine; alternate. Disordered regions lie at residues 310-365 (DTSS…TEQP) and 383-437 (PSSF…RAVG). Over residues 313 to 324 (SEERWQKAEEQR) the composition is skewed to basic and acidic residues. 2 stretches are compositionally biased toward polar residues: residues 354 to 364 (AQQSRAVQTEQ) and 383 to 393 (PSSFVPTSKTI). Basic and acidic residues predominate over residues 415 to 427 (YEPRPDGSQDARK). S431 bears the Phosphoserine mark. R450 is modified (omega-N-methylarginine).

The polypeptide is Proline and serine-rich protein 2 (Proser2) (Mus musculus (Mouse)).